Here is a 476-residue protein sequence, read N- to C-terminus: Bifunctional protein HldE (476 aa).

Residues 1-318 (MFQYSAEFKQ…ENAIHGRSNT (318 aa)) are ribokinase. 195-198 (NMSE) is an ATP binding site. Asp264 is a catalytic residue. Positions 344-476 (MTNGCFDILH…VISKIQQLKD (133 aa)) are cytidylyltransferase.

In the N-terminal section; belongs to the carbohydrate kinase PfkB family. This sequence in the C-terminal section; belongs to the cytidylyltransferase family. As to quaternary structure, homodimer.

The catalysed reaction is D-glycero-beta-D-manno-heptose 7-phosphate + ATP = D-glycero-beta-D-manno-heptose 1,7-bisphosphate + ADP + H(+). It catalyses the reaction D-glycero-beta-D-manno-heptose 1-phosphate + ATP + H(+) = ADP-D-glycero-beta-D-manno-heptose + diphosphate. It participates in nucleotide-sugar biosynthesis; ADP-L-glycero-beta-D-manno-heptose biosynthesis; ADP-L-glycero-beta-D-manno-heptose from D-glycero-beta-D-manno-heptose 7-phosphate: step 1/4. It functions in the pathway nucleotide-sugar biosynthesis; ADP-L-glycero-beta-D-manno-heptose biosynthesis; ADP-L-glycero-beta-D-manno-heptose from D-glycero-beta-D-manno-heptose 7-phosphate: step 3/4. Its pathway is bacterial outer membrane biogenesis; LPS core biosynthesis. Its function is as follows. Catalyzes the phosphorylation of D-glycero-D-manno-heptose 7-phosphate at the C-1 position to selectively form D-glycero-beta-D-manno-heptose-1,7-bisphosphate. Functionally, catalyzes the ADP transfer from ATP to D-glycero-beta-D-manno-heptose 1-phosphate, yielding ADP-D-glycero-beta-D-manno-heptose. The sequence is that of Bifunctional protein HldE from Pasteurella multocida (strain Pm70).